The chain runs to 370 residues: Chorismate synthase (370 aa).

NADP(+) is bound at residue arginine 48. FMN is bound by residues 125–127, 241–242, glycine 286, 301–305, and arginine 327; these read RSS, NA, and KPTSS.

This sequence belongs to the chorismate synthase family. As to quaternary structure, homotetramer. It depends on FMNH2 as a cofactor.

It catalyses the reaction 5-O-(1-carboxyvinyl)-3-phosphoshikimate = chorismate + phosphate. It functions in the pathway metabolic intermediate biosynthesis; chorismate biosynthesis; chorismate from D-erythrose 4-phosphate and phosphoenolpyruvate: step 7/7. Functionally, catalyzes the anti-1,4-elimination of the C-3 phosphate and the C-6 proR hydrogen from 5-enolpyruvylshikimate-3-phosphate (EPSP) to yield chorismate, which is the branch point compound that serves as the starting substrate for the three terminal pathways of aromatic amino acid biosynthesis. This reaction introduces a second double bond into the aromatic ring system. The sequence is that of Chorismate synthase from Ruegeria sp. (strain TM1040) (Silicibacter sp.).